Reading from the N-terminus, the 577-residue chain is MRSHFCTEISEKDVGKIVKVAGWCNTYRDHGGVVFIDLRDKSGLVQLVCDPSSKAYEKALEVRSEFVLVAKGKVRLRGAGLENPKLKTGKIEIVLEELIIENKSATPPIEIGNKHVNEDLRLKYRYLDLRSPNSYEIFKLRSEVALITRNTLAQKGFLEIETPILSKTTPEGARDYLVPSRVHEGEFFALPQSPQLFKQLLMVGGMDRYFQIARCFRDEDLRADRQPEFTQIDAEMSFCDENDVMGVVEDLLQEIFKAVGHTISKPFKRMPYKEAMENYGSDKPDLRFELPLIEVGDCFRDSSNAIFSNTAKDPKNKRIKALNVKGADALFSRSVLKELEEFVRQFGAKGLAYLQIKEDEIKGPLVKFLSEKGLKNILERTDAQVGDIVFFGAGDKKIVLDYMGRLRLKVAETLDLIDKDALNFLWVVNFPMFEKTENGYHAAHHPFTMPKNIECEDIEEVEAHAYDVVLNGVELGGGSIRIHKEEMQKKVFEKINIHEEEAQKKFGFLLEALKFGAPPHGGFAIGFDRLIMLMTKSHSIRDVIAFPKTQKASCLLTNAPSPINEEQLRELHIRLRK.

Glutamate 171 contacts L-aspartate. An aspartate region spans residues 195 to 198 (QLFK). Arginine 217 contacts L-aspartate. ATP-binding positions include 217-219 (RDE) and glutamine 226. L-aspartate is bound at residue histidine 444. Glutamate 474 contacts ATP. Residue arginine 481 coordinates L-aspartate. 526-529 (GFDR) is a binding site for ATP.

The protein belongs to the class-II aminoacyl-tRNA synthetase family. Type 1 subfamily. As to quaternary structure, homodimer.

Its subcellular location is the cytoplasm. It catalyses the reaction tRNA(Asx) + L-aspartate + ATP = L-aspartyl-tRNA(Asx) + AMP + diphosphate. Functionally, aspartyl-tRNA synthetase with relaxed tRNA specificity since it is able to aspartylate not only its cognate tRNA(Asp) but also tRNA(Asn). Is 1.7 times more efficient at aminoacylating tRNA(Asp) over tRNA(Asn). Reaction proceeds in two steps: L-aspartate is first activated by ATP to form Asp-AMP and then transferred to the acceptor end of tRNA(Asp/Asn). This is Aspartate--tRNA(Asp/Asn) ligase from Helicobacter pylori (strain ATCC 700392 / 26695) (Campylobacter pylori).